The primary structure comprises 2193 residues: Genome polyprotein (2193 aa).

Residue Gly2 is the site of N-myristoyl glycine; by host attachment. Topologically, residues 2–1503 (GAQVSTQKTG…HVSRAFICLQ (1502 aa)) are cytoplasmic. Positions 565–582 (QLLQGDVEEAVNRAVARV) are amphipathic alpha-helix. Active-site for protease 2A activity residues include His880 and Asp898. Zn(2+) contacts are provided by Cys915 and Cys917. The active-site For protease 2A activity is Cys969. Zn(2+) contacts are provided by Cys975 and His977. Residues 1109–1181 (SNGWLKKFTE…EQSAPSQSDQ (73 aa)) form a membrane-binding region. Positions 1109–1247 (SNGWLKKFTE…SPGAGKSVAT (139 aa)) are oligomerization. Positions 1130 to 1134 (AIKIQ) are RNA-binding. The SF3 helicase domain maps to 1213 to 1369 (EKKMSNYIQF…SMYSQNGKIN (157 aa)). Zn(2+)-binding residues include Cys1377, Cys1389, and Cys1394. Residues 1377–1394 (CDEECCPVNFKRCCPLVC) form a C4-type; degenerate zinc finger. The interval 1421 to 1428 (EYNHRHSV) is RNA-binding. An oligomerization region spans residues 1432-1437 (LEALFQ). Residues 1504–1519 (ALTTFVSVAGIIYIIY) lie within the membrane without spanning it. The Cytoplasmic portion of the chain corresponds to 1520–2193 (KLFAGFQGAY…TLRRKWLDSF (674 aa)). Position 1529 is an O-(5'-phospho-RNA)-tyrosine (Tyr1529). The 179-residue stretch at 1549 to 1727 (GPAFEFAVAM…FSAALLRHYF (179 aa)) folds into the Peptidase C3 domain. Catalysis depends on for protease 3C activity residues His1588, Glu1619, and Cys1695. Positions 1958-2074 (GHLIAFDYSG…SYPWPIDASL (117 aa)) constitute a RdRp catalytic domain. Residues Asp1964 and Asp2060 each coordinate Mg(2+).

The protein belongs to the picornaviruses polyprotein family. In terms of assembly, interacts with capsid protein VP1 and capsid protein VP3 to form heterotrimeric protomers. Interacts with capsid protein VP0, and capsid protein VP3 to form heterotrimeric protomers. Five protomers subsequently associate to form pentamers which serve as building blocks for the capsid. Interacts with capsid protein VP2, capsid protein VP3 and capsid protein VP4 following cleavage of capsid protein VP0. As to quaternary structure, interacts with capsid protein VP1 and capsid protein VP3 in the mature capsid. Interacts with host CD55; this interaction promotes virus attachment to the host cell and subsequent internalization. In terms of assembly, interacts with capsid protein VP0 and capsid protein VP1 to form heterotrimeric protomers. Five protomers subsequently associate to form pentamers which serve as building blocks for the capsid. Interacts with capsid protein VP4 in the mature capsid. Interacts with protein 2C; this interaction may be important for virion morphogenesis. Interacts with host CD55; this interaction promotes virus attachment to the host cell and subsequent internalization. Interacts with capsid protein VP1 and capsid protein VP3. As to quaternary structure, homodimer. In terms of assembly, homohexamer; forms a hexameric ring structure with 6-fold symmetry characteristic of AAA+ ATPases. Interacts (via N-terminus) with host RTN3 (via reticulon domain); this interaction is important for viral replication. Interacts with capsid protein VP3; this interaction may be important for virion morphogenesis. Interacts with protein 3CD. As to quaternary structure, homodimer. Interacts with host GBF1. Interacts (via GOLD domain) with host ACBD3 (via GOLD domain); this interaction allows the formation of a viral protein 3A/ACBD3 heterotetramer with a 2:2 stoichiometry, which will stimulate the recruitment of host PI4KB in order to synthesize PI4P at the viral RNA replication sites. In terms of assembly, interacts with RNA-directed RNA polymerase. Interacts with protein 3AB and with RNA-directed RNA polymerase. As to quaternary structure, interacts with Viral protein genome-linked and with protein 3CD. Requires Mg(2+) as cofactor. Post-translationally, specific enzymatic cleavages in vivo by the viral proteases yield processing intermediates and the mature proteins. In terms of processing, myristoylation is required for the formation of pentamers during virus assembly. Further assembly of 12 pentamers and a molecule of genomic RNA generates the provirion. During virion maturation, immature virions are rendered infectious following cleavage of VP0 into VP4 and VP2. This maturation seems to be an autocatalytic event triggered by the presence of RNA in the capsid and it is followed by a conformational change infectious virion. Post-translationally, myristoylation is required during RNA encapsidation and formation of the mature virus particle. In terms of processing, VPg is uridylylated by the polymerase into VPg-pUpU. This acts as a nucleotide-peptide primer for the genomic RNA replication.

It localises to the virion. The protein resides in the host cytoplasm. It is found in the host cytoplasmic vesicle membrane. The protein localises to the host nucleus. The enzyme catalyses a ribonucleoside 5'-triphosphate + H2O = a ribonucleoside 5'-diphosphate + phosphate + H(+). It catalyses the reaction Selective cleavage of Tyr-|-Gly bond in the picornavirus polyprotein.. The catalysed reaction is RNA(n) + a ribonucleoside 5'-triphosphate = RNA(n+1) + diphosphate. It carries out the reaction Selective cleavage of Gln-|-Gly bond in the poliovirus polyprotein. In other picornavirus reactions Glu may be substituted for Gln, and Ser or Thr for Gly.. Replication or transcription is subject to high level of random mutations by the nucleotide analog ribavirin. Its function is as follows. Forms an icosahedral capsid of pseudo T=3 symmetry with capsid proteins VP2 and VP3. The capsid is 300 Angstroms in diameter, composed of 60 copies of each capsid protein and enclosing the viral positive strand RNA genome. Capsid protein VP1 mainly forms the vertices of the capsid. Capsid protein VP1 interacts with host cell receptor to provide virion attachment to target host cells. This attachment induces virion internalization. Tyrosine kinases are probably involved in the entry process. After binding to its receptor, the capsid undergoes conformational changes. Capsid protein VP1 N-terminus (that contains an amphipathic alpha-helix) and capsid protein VP4 are externalized. Together, they shape a pore in the host membrane through which viral genome is translocated to host cell cytoplasm. In terms of biological role, forms an icosahedral capsid of pseudo T=3 symmetry with capsid proteins VP2 and VP3. The capsid is 300 Angstroms in diameter, composed of 60 copies of each capsid protein and enclosing the viral positive strand RNA genome. Lies on the inner surface of the capsid shell. After binding to the host receptor, the capsid undergoes conformational changes. Capsid protein VP4 is released, Capsid protein VP1 N-terminus is externalized, and together, they shape a pore in the host membrane through which the viral genome is translocated into the host cell cytoplasm. Functionally, component of immature procapsids, which is cleaved into capsid proteins VP4 and VP2 after maturation. Allows the capsid to remain inactive before the maturation step. Its function is as follows. Cysteine protease that cleaves viral polyprotein and specific host proteins. It is responsible for the autocatalytic cleavage between the P1 and P2 regions, which is the first cleavage occurring in the polyprotein. Also cleaves the host translation initiation factor EIF4G1, in order to shut down the capped cellular mRNA translation. Inhibits the host nucleus-cytoplasm protein and RNA trafficking by cleaving host members of the nuclear pores. Counteracts stress granule formation probably by antagonizing its assembly or promoting its dissassembly. In terms of biological role, plays an essential role in the virus replication cycle by acting as a viroporin. Creates a pore in the host endoplasmic reticulum and as a consequence releases Ca2+ in the cytoplasm of infected cell. In turn, high levels of cytoplasmic calcium may trigger membrane trafficking and transport of viral ER-associated proteins to viroplasms, sites of viral genome replication. Induces and associates with structural rearrangements of intracellular membranes. Displays RNA-binding, nucleotide binding and NTPase activities. May play a role in virion morphogenesis and viral RNA encapsidation by interacting with the capsid protein VP3. Functionally, localizes the viral replication complex to the surface of membranous vesicles. Together with protein 3CD binds the Cis-Active RNA Element (CRE) which is involved in RNA synthesis initiation. Acts as a cofactor to stimulate the activity of 3D polymerase, maybe through a nucleid acid chaperone activity. Its function is as follows. Localizes the viral replication complex to the surface of membranous vesicles. It inhibits host cell endoplasmic reticulum-to-Golgi apparatus transport and causes the disassembly of the Golgi complex, possibly through GBF1 interaction. This would result in depletion of MHC, trail receptors and IFN receptors at the host cell surface. Plays an essential role in viral RNA replication by recruiting ACBD3 and PI4KB at the viral replication sites, thereby allowing the formation of the rearranged membranous structures where viral replication takes place. In terms of biological role, acts as a primer for viral RNA replication and remains covalently bound to viral genomic RNA. VPg is uridylylated prior to priming replication into VPg-pUpU. The oriI viral genomic sequence may act as a template for this. The VPg-pUpU is then used as primer on the genomic RNA poly(A) by the RNA-dependent RNA polymerase to replicate the viral genome. During genome replication, the VPg-RNA linkage is removed by the host TDP2, thereby accelerating replication. During the late stage of the replication cycle, host TDP2 is excluded from sites of viral RNA synthesis and encapsidation, allowing for the generation of progeny virions. Involved in the viral replication complex and viral polypeptide maturation. It exhibits protease activity with a specificity and catalytic efficiency that is different from protease 3C. Protein 3CD lacks polymerase activity. Protein 3CD binds to the 5'UTR of the viral genome. Functionally, replicates the viral genomic RNA on the surface of intracellular membranes. May form linear arrays of subunits that propagate along a strong head-to-tail interaction called interface-I. Covalently attaches UMP to a tyrosine of VPg, which is used to prime RNA synthesis. The positive stranded RNA genome is first replicated at virus induced membranous vesicles, creating a dsRNA genomic replication form. This dsRNA is then used as template to synthesize positive stranded RNA genomes. ss(+)RNA genomes are either translated, replicated or encapsidated. Its function is as follows. Major viral protease that mediates proteolytic processing of the polyprotein. Cleaves host EIF5B, contributing to host translation shutoff. Also cleaves host PABPC1, contributing to host translation shutoff. Cleaves host NLRP1, triggers host N-glycine-mediated degradation of the autoinhibitory NLRP1 N-terminal fragment. The sequence is that of Genome polyprotein from Echovirus 12 (strain Travis).